A 159-amino-acid chain; its full sequence is SsrA-binding protein (159 aa).

Belongs to the SmpB family.

It localises to the cytoplasm. Its function is as follows. Required for rescue of stalled ribosomes mediated by trans-translation. Binds to transfer-messenger RNA (tmRNA), required for stable association of tmRNA with ribosomes. tmRNA and SmpB together mimic tRNA shape, replacing the anticodon stem-loop with SmpB. tmRNA is encoded by the ssrA gene; the 2 termini fold to resemble tRNA(Ala) and it encodes a 'tag peptide', a short internal open reading frame. During trans-translation Ala-aminoacylated tmRNA acts like a tRNA, entering the A-site of stalled ribosomes, displacing the stalled mRNA. The ribosome then switches to translate the ORF on the tmRNA; the nascent peptide is terminated with the 'tag peptide' encoded by the tmRNA and targeted for degradation. The ribosome is freed to recommence translation, which seems to be the essential function of trans-translation. The polypeptide is SsrA-binding protein (Dichelobacter nodosus (strain VCS1703A)).